Consider the following 465-residue polypeptide: Cysteine--tRNA ligase (465 aa).

Cys-30 is a binding site for Zn(2+). The 'HIGH' region signature appears at 32 to 42 (ITVYDYCHVGH). 3 residues coordinate Zn(2+): Cys-214, His-239, and Glu-243. Residues 271-275 (KMSKS) carry the 'KMSKS' region motif. Lys-274 contributes to the ATP binding site.

Belongs to the class-I aminoacyl-tRNA synthetase family. As to quaternary structure, monomer. Requires Zn(2+) as cofactor.

The protein localises to the cytoplasm. It catalyses the reaction tRNA(Cys) + L-cysteine + ATP = L-cysteinyl-tRNA(Cys) + AMP + diphosphate. In Burkholderia orbicola (strain MC0-3), this protein is Cysteine--tRNA ligase.